The chain runs to 247 residues: Ras-like protein family member 11B (247 aa).

The interval 29–247 (ASSRVIKIAV…SAKVRTATSV (219 aa)) is small GTPase-like. GTP contacts are provided by residues 40 to 47 (GGSGVGKT), 87 to 91 (DTPGV), and 152 to 155 (NKAD). The interval 205–228 (QNTGTPERRKNSLIPRPKSPNMQD) is disordered.

This sequence belongs to the small GTPase superfamily. Ras family.

It carries out the reaction GTP + H2O = GDP + phosphate + H(+). This chain is Ras-like protein family member 11B, found in Xenopus tropicalis (Western clawed frog).